Consider the following 416-residue polypeptide: MKHASEFLNFIQERGYLYQCTNIEGLDQLLLQSNYIVAYIGFDCTAPSLHAGHLIQIMMLCHLQKFGYKPIVLLGGGTTKIGDPSFKDKARSILPVENINQNTSSIRRILEKMVSFNDSKTGAMIVNNADWLDNIKYIDFLRDIGAYFSVNRMLSFDSVKTRLDREQTLSFLEFNYMLLQAYDFIELNKKYDCRLQIGGSDQWGNIVNGIELGKKLNLPELFGLTMPLLLNAQGKKMGKTESGAVWLDDNMLKPYDYWQYFRNVDDQDVGRFLRLLTDVPIDEIRKLESLKDQEINEAKKVLATEVTKICHGDKEAELAQFAAISAFENEDSSLLPDYIIKKEQVASGISLVDLLHDTGFEPSKGAAKRLIQGNGCKINDNVVNNIDHVINFESFKDQPFIKLSAGKKRHIKVVVD.

Residue tyrosine 39 coordinates L-tyrosine. A 'HIGH' region motif is present at residues 44–53 (CTAPSLHAGH). 2 residues coordinate L-tyrosine: tyrosine 176 and glutamine 180. A 'KMSKS' region motif is present at residues 236 to 240 (KMGKT). Residue lysine 239 participates in ATP binding. The S4 RNA-binding domain maps to 349–414 (ISLVDLLHDT…AGKKRHIKVV (66 aa)).

Belongs to the class-I aminoacyl-tRNA synthetase family. TyrS type 1 subfamily. Homodimer.

It is found in the cytoplasm. The catalysed reaction is tRNA(Tyr) + L-tyrosine + ATP = L-tyrosyl-tRNA(Tyr) + AMP + diphosphate + H(+). Its function is as follows. Catalyzes the attachment of tyrosine to tRNA(Tyr) in a two-step reaction: tyrosine is first activated by ATP to form Tyr-AMP and then transferred to the acceptor end of tRNA(Tyr). This is Tyrosine--tRNA ligase from Wolbachia pipientis wMel.